The primary structure comprises 913 residues: Auxilin (913 aa).

Methionine 1 bears the N-acetylmethionine mark. 3 repeat units span residues asparagine 36–aspartate 39, asparagine 40–aspartate 43, and threonine 44–aspartate 47. The interval asparagine 36–aspartate 47 is 3 X 4 AA approximate tandem repeats. Residues serine 55 to lysine 222 enclose the Phosphatase tensin-type domain. A Phosphoserine modification is found at serine 112. Cysteine 164 functions as the Phosphocysteine intermediate in the catalytic mechanism. One can recognise a C2 tensin-type domain in the interval phenylalanine 228 to glutamine 366. The SH3-binding signature appears at proline 409–proline 417. The tract at residues glutamine 451 to lysine 776 is disordered. Phosphoserine is present on residues serine 453 and serine 456. The segment covering alanine 506–leucine 523 has biased composition (polar residues). The segment covering alanine 554–threonine 572 has biased composition (low complexity). Serine 563 and serine 570 each carry phosphoserine. Over residues phenylalanine 599–valine 629 the composition is skewed to polar residues. The segment covering serine 654 to histidine 669 has biased composition (low complexity). A J domain is found at threonine 849–tyrosine 913.

As to quaternary structure, forms a complex composed of HSPA8, CLTC and DNAJC6. Interacts with HSPA8/HSC70 in an ATP-dependent manner; this interaction stimulates the HSPA8's ATPase activity. Interacts with CLTC; this interaction produces a local change in heavy-chain contacts, creating a detectable global distortion of the clathrin coat. Interacts with AP2A2. Interacts with DNM1(GTP-bound form); this interaction allows clathrin-coated vesicle (CCV) formation at the plasma membrane. Phosphorylation at Ser-570 modulates its ability to bind CLTC and therefore the synaptic vesicle endocytosis (SVE). In terms of processing, the N-terminus is blocked. In terms of tissue distribution, expressed in various brain regions, including cerebellum, corpus callosum, cortex, striatum, brainstem, pons, putamen, spinal cord and substantia nigra. Very low expression in non-neural tissues such as leukocytes, liver, adipose tissue, skeletal muscle and bone marrow.

The protein resides in the cytoplasmic vesicle. It is found in the clathrin-coated vesicle. Functionally, may act as a protein phosphatase and/or a lipid phosphatase. Co-chaperone that recruits HSPA8/HSC70 to clathrin-coated vesicles (CCVs) and promotes the ATP-dependent dissociation of clathrin from CCVs and participates in clathrin-mediated endocytosis of synaptic vesicles and their recycling and also in intracellular trafficking. Firstly, binds tightly to the clathrin cages, at a ratio of one DNAJC6 per clathrin triskelion. The HSPA8:ATP complex then binds to the clathrin-auxilin cage, initially at a ratio of one HSPA8 per triskelion leading to ATP hydrolysis stimulation and causing a conformational change in the HSPA8. This cycle is repeated three times to drive to a complex containing the clathrin-auxilin cage associated to three HSPA8:ADP complex. The ATP hydrolysis of the third HSPA8:ATP complex leads to a concerted dismantling of the cage into component triskelia. Then, dissociates from the released triskelia and be recycled to initiate another cycle of HSPA8's recruitment. Also acts during the early steps of clathrin-coated vesicle (CCV) formation through its interaction with the GTP bound form of DNM1. This chain is Auxilin, found in Homo sapiens (Human).